The following is a 377-amino-acid chain: T-protein (377 aa).

Positions 1-92 (MSFMEALKDL…ESYANENQFG (92 aa)) constitute a Chorismate mutase domain. In terms of domain architecture, Prephenate/arogenate dehydrogenase spans 101–364 (HKIVIVGGYG…DYSEQFLKES (264 aa)).

In the C-terminal section; belongs to the prephenate/arogenate dehydrogenase family.

Its subcellular location is the cytoplasm. The catalysed reaction is chorismate = prephenate. The enzyme catalyses prephenate + NAD(+) = 3-(4-hydroxyphenyl)pyruvate + CO2 + NADH. The protein operates within amino-acid biosynthesis; L-tyrosine biosynthesis; (4-hydroxyphenyl)pyruvate from prephenate (NAD(+) route): step 1/1. It functions in the pathway metabolic intermediate biosynthesis; prephenate biosynthesis; prephenate from chorismate: step 1/1. The sequence is that of T-protein (tyrA) from Haemophilus influenzae (strain ATCC 51907 / DSM 11121 / KW20 / Rd).